A 144-amino-acid polypeptide reads, in one-letter code: UPF0225 protein RSc0270 (144 aa).

This sequence belongs to the UPF0225 family.

In Ralstonia nicotianae (strain ATCC BAA-1114 / GMI1000) (Ralstonia solanacearum), this protein is UPF0225 protein RSc0270.